Consider the following 344-residue polypeptide: Putative 2-hydroxyacid dehydrogenase YoaD (344 aa).

D193 contacts NAD(+). R251 is an active-site residue. An NAD(+)-binding site is contributed by D275. E280 is an active-site residue. H300 serves as the catalytic Proton donor.

It belongs to the D-isomer specific 2-hydroxyacid dehydrogenase family.

This chain is Putative 2-hydroxyacid dehydrogenase YoaD (yoaD), found in Bacillus subtilis (strain 168).